The following is a 369-amino-acid chain: Integrator complex assembly factor WDR73 (369 aa).

3 WD repeats span residues 74–114 (FIDE…RDVI), 266–306 (AASE…SAMK), and 326–366 (GREP…VHDG).

Belongs to the WD repeat WDR73 family.

The protein localises to the cytoplasm. It is found in the cytoskeleton. Its subcellular location is the spindle. The protein resides in the spindle pole. It localises to the cleavage furrow. Its function is as follows. Component of a multiprotein complex required for the assembly of the RNA endonuclease module of the integrator complex. Associates with ints9 and ints11 in the cytoplasm, stabilizing the ints9-ints11 heterodimer and blocking the active site of ints11. Brat1 then joins the complex and plugs the active site of ints11, leading to wdr73 release and nuclear import of ints9 and ints11. The chain is Integrator complex assembly factor WDR73 (wdr73) from Xenopus laevis (African clawed frog).